Consider the following 755-residue polypeptide: Bacteriophytochrome (755 aa).

Residue cysteine 24 coordinates a tetrapyrrole. Residues 26–94 (REPIHIPGSI…LQAALPPGCP (69 aa)) form the PAS domain. The tract at residues 95 to 504 (DALQYRATLD…RDTLTGALGE (410 aa)) is chromophore binding domain. In terms of domain architecture, GAF spans 152–316 (NLRALAEVAT…YLGRLLSLQV (165 aa)). The region spanning 529–747 (VISHHMQEPV…TFRCWLPDAG (219 aa)) is the Histidine kinase domain. Histidine 532 carries the post-translational modification Phosphohistidine; by autocatalysis.

In the N-terminal section; belongs to the phytochrome family. In terms of processing, contains one covalently linked tetrapyrrole chromophore. Lacks the cysteine conserved in plant phytochromes (at the position of Met-259) that binds chromophore. An engineered sequence used for X-ray crystallography forms a thioether link to biliverdin through Cys-24. The natural sequence can bind phycocyanobilin and phytochromobilin in vitro, but the identity of the natural chromophore is unknown.

It carries out the reaction ATP + protein L-histidine = ADP + protein N-phospho-L-histidine.. Its function is as follows. Photoreceptor which exists in two forms that are reversibly interconvertible by light: the R form that absorbs maximally in the red region of the spectrum and the FR form that absorbs maximally in the far-red region. Also has a slight blue shift for the far-red maximum. Could also absorb green light. May participate in regulating pigment synthesis like the carotenoid deinoxanthin which could protect the bacterium from intense visible light. The polypeptide is Bacteriophytochrome (bphP) (Deinococcus radiodurans (strain ATCC 13939 / DSM 20539 / JCM 16871 / CCUG 27074 / LMG 4051 / NBRC 15346 / NCIMB 9279 / VKM B-1422 / R1)).